The chain runs to 346 residues: [LysW]-lysine/[LysW]-ornithine hydrolase (346 aa).

A Zn(2+)-binding site is contributed by H68. Residue D70 is part of the active site. D92 is a binding site for Zn(2+). E122 serves as the catalytic Proton acceptor. Residues E123, E146, and H317 each coordinate Zn(2+).

Belongs to the peptidase M20A family. LysK subfamily. Requires Zn(2+) as cofactor. The cofactor is Co(2+).

Its subcellular location is the cytoplasm. It catalyses the reaction [amino-group carrier protein]-C-terminal-gamma-(L-lysyl)-L-glutamate + H2O = [amino-group carrier protein]-C-terminal-L-glutamate + L-lysine. It carries out the reaction [amino-group carrier protein]-C-terminal-gamma-(L-ornithyl)-L-glutamate + H2O = [amino-group carrier protein]-C-terminal-L-glutamate + L-ornithine. It functions in the pathway amino-acid biosynthesis; L-lysine biosynthesis via AAA pathway; L-lysine from L-alpha-aminoadipate (Thermus route): step 5/5. It participates in amino-acid biosynthesis; L-arginine biosynthesis. In terms of biological role, catalyzes the release of L-lysine from [LysW]-gamma-L-lysine and the release of L-ornithine from [LysW]-L-ornithine. The chain is [LysW]-lysine/[LysW]-ornithine hydrolase from Saccharolobus islandicus (strain M.16.27) (Sulfolobus islandicus).